The chain runs to 260 residues: tRNA (guanine-N(1)-)-methyltransferase (260 aa).

S-adenosyl-L-methionine contacts are provided by residues glycine 117 and leucine 137–leucine 142.

The protein belongs to the RNA methyltransferase TrmD family. As to quaternary structure, homodimer.

It is found in the cytoplasm. It catalyses the reaction guanosine(37) in tRNA + S-adenosyl-L-methionine = N(1)-methylguanosine(37) in tRNA + S-adenosyl-L-homocysteine + H(+). Specifically methylates guanosine-37 in various tRNAs. This chain is tRNA (guanine-N(1)-)-methyltransferase, found in Cupriavidus metallidurans (strain ATCC 43123 / DSM 2839 / NBRC 102507 / CH34) (Ralstonia metallidurans).